The primary structure comprises 874 residues: MNSWTGLSEQAAIKSRQEHGANFLPEKKATPFWLLFLQQFKSLVVILLLLASLLSFVVAIVSGLRSNWNFNHDLIIEWVQPFIILLTVFANSLIGSIQEFKAQKSASALKSLTKSFTRVFRNGELISINVSEVVVGDIIFVDAGDIIPADGKLLQVNNLRCLESFLTGESTPVDKTIDSNEKATILEQTNLVFSGAQVVYGSGVFQVEAVGIKTQVGKIAKTVDDSVTKLSPLQQKLEKIGKWFSWFGLGLFAVVFLVQTALLGFDNFTNNWSIALIGAIALVVAIIPEGLVTFINVIFALSVQKLTKQKAIIKYLSVIETLGSVQIICTDKTGTLTQNQMKVVDHFCFNSTTQTDLARALCLCNNASISKDANKTGDPTEIALLEWKDRSQLDLKTYYRVYEKAFDSIRKLMTVVVQKDNRFIVIVKGAPDVLLPLCNNVQNEVKNIENLLDQSAGQGLRTLAVALKVLYKFDQNDQKQIDELENNLEFLGFVSLQDPPRKESKEAILACKKANITPIMITGDHLKTATVIAKELGILTLDNQAVLGSELDEKKILDYRVFARVTPQQKLAIVSAWKEAGFTVSVTGDGVNDAPALIKSDVGCCMGITGVDIAKDASDLIISDDNFATIVNGIEEGRKTFLTCKRVLLNLFLTSIAGTVVVLLGLFILGQVFKTNLLQQGHDFQVFSPTQLLIINLFVHGFPAVALAVQPVKEKLMVGSFSTKNLFYNRQGFDLIWQSLFLSFLTLLFYSLGIIYAINNRDLQTSGDLINRAGSTCGFFILGASAALNSLNLMVDKPLLMTNPWFFKLVWIGSLASILVFLLIIFINPLGLVFNVLQDLTNHPVLISYSFGGVILYMGMNEVVKLIRLGYGNI.

Topologically, residues 1 to 41 (MNSWTGLSEQAAIKSRQEHGANFLPEKKATPFWLLFLQQFK) are cytoplasmic. The chain crosses the membrane as a helical span at residues 42-62 (SLVVILLLLASLLSFVVAIVS). Residues 63–79 (GLRSNWNFNHDLIIEWV) are Extracellular-facing. Residues 80–100 (QPFIILLTVFANSLIGSIQEF) form a helical membrane-spanning segment. Over 101-237 (KAQKSASALK…TKLSPLQQKL (137 aa)) the chain is Cytoplasmic. Residues 238-257 (EKIGKWFSWFGLGLFAVVFL) form a helical membrane-spanning segment. The Extracellular portion of the chain corresponds to 258-275 (VQTALLGFDNFTNNWSIA). Residues 276–293 (LIGAIALVVAIIPEGLVT) traverse the membrane as a helical segment. Topologically, residues 294 to 644 (FINVIFALSV…EEGRKTFLTC (351 aa)) are cytoplasmic. Catalysis depends on D331, which acts as the 4-aspartylphosphate intermediate. Positions 589 and 593 each coordinate Mg(2+). Residues 645 to 664 (KRVLLNLFLTSIAGTVVVLL) form a helical membrane-spanning segment. The Extracellular segment spans residues 665 to 687 (GLFILGQVFKTNLLQQGHDFQVF). Residues 688 to 708 (SPTQLLIINLFVHGFPAVALA) form a helical membrane-spanning segment. The Cytoplasmic portion of the chain corresponds to 709-726 (VQPVKEKLMVGSFSTKNL). A helical transmembrane segment spans residues 727–749 (FYNRQGFDLIWQSLFLSFLTLLF). At 750-770 (YSLGIIYAINNRDLQTSGDLI) the chain is on the extracellular side. The chain crosses the membrane as a helical span at residues 771-790 (NRAGSTCGFFILGASAALNS). Residues 791 to 803 (LNLMVDKPLLMTN) are Cytoplasmic-facing. Residues 804–826 (PWFFKLVWIGSLASILVFLLIIF) traverse the membrane as a helical segment. The Extracellular portion of the chain corresponds to 827–844 (INPLGLVFNVLQDLTNHP). A helical transmembrane segment spans residues 845-865 (VLISYSFGGVILYMGMNEVVK). The Cytoplasmic segment spans residues 866–874 (LIRLGYGNI).

The protein belongs to the cation transport ATPase (P-type) (TC 3.A.3) family. Type II subfamily.

It localises to the cell membrane. The catalysed reaction is ATP + H2O = ADP + phosphate + H(+). In terms of biological role, could mediate calcium influx. This is Probable cation-transporting P-type ATPase (pacL) from Mycoplasma genitalium (strain ATCC 33530 / DSM 19775 / NCTC 10195 / G37) (Mycoplasmoides genitalium).